A 158-amino-acid polypeptide reads, in one-letter code: Transcription elongation factor GreA (158 aa).

Residues 45–72 are a coiled coil; sequence AEYHAAREQQSFIEGRIKQLEGELSHAE.

The protein belongs to the GreA/GreB family.

Necessary for efficient RNA polymerase transcription elongation past template-encoded arresting sites. The arresting sites in DNA have the property of trapping a certain fraction of elongating RNA polymerases that pass through, resulting in locked ternary complexes. Cleavage of the nascent transcript by cleavage factors such as GreA or GreB allows the resumption of elongation from the new 3'terminus. GreA releases sequences of 2 to 3 nucleotides. The protein is Transcription elongation factor GreA of Xylella fastidiosa (strain M23).